We begin with the raw amino-acid sequence, 252 residues long: Imidazole glycerol phosphate synthase subunit HisF (252 aa).

Active-site residues include aspartate 11 and aspartate 130.

This sequence belongs to the HisA/HisF family. As to quaternary structure, heterodimer of HisH and HisF.

It is found in the cytoplasm. The enzyme catalyses 5-[(5-phospho-1-deoxy-D-ribulos-1-ylimino)methylamino]-1-(5-phospho-beta-D-ribosyl)imidazole-4-carboxamide + L-glutamine = D-erythro-1-(imidazol-4-yl)glycerol 3-phosphate + 5-amino-1-(5-phospho-beta-D-ribosyl)imidazole-4-carboxamide + L-glutamate + H(+). It participates in amino-acid biosynthesis; L-histidine biosynthesis; L-histidine from 5-phospho-alpha-D-ribose 1-diphosphate: step 5/9. Its function is as follows. IGPS catalyzes the conversion of PRFAR and glutamine to IGP, AICAR and glutamate. The HisF subunit catalyzes the cyclization activity that produces IGP and AICAR from PRFAR using the ammonia provided by the HisH subunit. This is Imidazole glycerol phosphate synthase subunit HisF from Thermococcus gammatolerans (strain DSM 15229 / JCM 11827 / EJ3).